The primary structure comprises 369 residues: Chanoclavine-I aldehyde reductase fgaOx3 (369 aa).

FMN-binding positions include 23–25 (PMT), Ala58, Gln100, and His169. 2 residues coordinate substrate: His169 and Asn172. Tyr174 acts as the Proton donor in catalysis. Residues Gly292, 316–317 (GR), and Arg317 contribute to the FMN site. Residue Tyr344 coordinates substrate.

This sequence belongs to the NADH:flavin oxidoreductase/NADH oxidase family. Monomer. FMN serves as cofactor.

The enzyme catalyses dihydrochanoclavine-I aldehyde + NADP(+) = chanoclavine-I aldehyde + NADPH + H(+). The protein operates within alkaloid biosynthesis; ergot alkaloid biosynthesis. Its function is as follows. Chanoclavine-I aldehyde reductase; part of the gene cluster that mediates the biosynthesis of isofumigaclavines, fungal ergot alkaloids. The tryptophan dimethylallyltransferase ifgA catalyzes the first step of ergot alkaloid biosynthesis by condensing dimethylallyl diphosphate (DMAP) and tryptophan to form 4-dimethylallyl-L-tryptophan. The second step is catalyzed by the methyltransferase ifgB that methylates 4-dimethylallyl-L-tryptophan in the presence of S-adenosyl-L-methionine, resulting in the formation of N-methyl-dimethylallyl-L-tryptophan. The catalase ifgD and the FAD-dependent oxidoreductase ifgC then transform N-methyl-dimethylallyl-L-tryptophan to chanoclavine-I which is further oxidized by ifgE in the presence of NAD(+), resulting in the formation of chanoclavine-I aldehyde. The chanoclavine-I aldehyde reductases ifgG and/or fgaOx3 reduce chanoclavine-I aldehyde to dihydrochanoclavine-I aldehyde that spontaneously dehydrates to form 6,8-dimethyl-6,7-didehydroergoline. The festuclavine dehydrogenases ifgF1 and/or ifgF2 then catalyze the reduction of 6,8-dimethyl-6,7-didehydroergoline to form festuclavine. Hydrolysis of festuclavine by a yet undetermined cytochrome P450 monooxygenase (called ifgH) then leads to the formation of isofumigaclavine B which is in turn acetylated by ifgI to isofumigaclavine A. Penicillium roqueforti has interestingly at least two sets of genes for the consumption of chanoclavine-I aldehyde on three different loci, the OYEs ifgG/fgaOx3 and the festuclavine synthase homologs ifgF1/ifgF2. The reason for the duplication of these genes is unclear, probably to ensure the conversion of chanoclavine-I aldehyde by differential gene expression under various environmental conditions. The polypeptide is Chanoclavine-I aldehyde reductase fgaOx3 (Penicillium roqueforti (strain FM164)).